Here is a 470-residue protein sequence, read N- to C-terminus: Na(+)/H(+) antiporter NhaA 2 (470 aa).

11 consecutive transmembrane segments (helical) span residues 34–54 (FLHI…IALL), 85–105 (LEWV…GMEI), 121–141 (ALPA…YLLL), 150–170 (GWGV…TLLG), 179–199 (VLLL…IAVF), 202–222 (SGVA…VFAM), 241–261 (WAGV…IGLI), 317–337 (SLIA…FALA), 357–377 (LATA…ACWL), 395–415 (LLVL…IAQL), and 423–443 (LAAG…VALV).

It belongs to the NhaA Na(+)/H(+) (TC 2.A.33) antiporter family.

The protein resides in the cell inner membrane. The enzyme catalyses Na(+)(in) + 2 H(+)(out) = Na(+)(out) + 2 H(+)(in). Na(+)/H(+) antiporter that extrudes sodium in exchange for external protons. This Myxococcus xanthus (strain DK1622) protein is Na(+)/H(+) antiporter NhaA 2.